The primary structure comprises 131 residues: uncharacterized protein (131 aa).

This is an uncharacterized protein from Mycobacterium tuberculosis (strain CDC 1551 / Oshkosh).